Here is a 378-residue protein sequence, read N- to C-terminus: Outer membrane porin C (378 aa).

An N-terminal signal peptide occupies residues Met-1 to Ala-21.

This sequence belongs to the Gram-negative porin family. In terms of assembly, homotrimer.

Its subcellular location is the cell outer membrane. In terms of biological role, forms pores that allow passive diffusion of small molecules across the outer membrane. This is Outer membrane porin C (ompC) from Salmonella typhimurium (strain LT2 / SGSC1412 / ATCC 700720).